A 301-amino-acid chain; its full sequence is Cytidine deaminase 1 (301 aa).

2 CMP/dCMP-type deaminase domains span residues 23-156 (SVIQ…FGPD) and 188-301 (DSSA…CYEA). A substrate-binding site is contributed by 64 to 66 (NVE). Zn(2+) is bound at residue H77. Catalysis depends on E79, which acts as the Proton donor. Residues C104 and C107 each coordinate Zn(2+).

Belongs to the cytidine and deoxycytidylate deaminase family. Homodimer. The cofactor is Zn(2+). In terms of tissue distribution, expressed in roots, rosette leaves, stems and flowers.

The catalysed reaction is cytidine + H2O + H(+) = uridine + NH4(+). The enzyme catalyses 2'-deoxycytidine + H2O + H(+) = 2'-deoxyuridine + NH4(+). Inhibited by uridine, CMP and dCMP. In terms of biological role, this enzyme scavenges exogenous and endogenous cytidine and 2'-deoxycytidine for UMP synthesis. Functions as a conventional cytidine deaminase. Has no affinity for RNA and is not involved in RNA-editing by C-to-U deamination. In Arabidopsis thaliana (Mouse-ear cress), this protein is Cytidine deaminase 1 (CDA1).